A 338-amino-acid polypeptide reads, in one-letter code: Large ribosomal subunit protein uL3 (338 aa).

A disordered region spans residues 230–258 (HRKGHRRTGTIGPQAPAVMFTQPRPGQMG).

It belongs to the universal ribosomal protein uL3 family. Part of the 50S ribosomal subunit. Forms a cluster with proteins L14 and L24e.

Its function is as follows. One of the primary rRNA binding proteins, it binds directly near the 3'-end of the 23S rRNA, where it nucleates assembly of the 50S subunit. The polypeptide is Large ribosomal subunit protein uL3 (Pyrobaculum aerophilum (strain ATCC 51768 / DSM 7523 / JCM 9630 / CIP 104966 / NBRC 100827 / IM2)).